The following is a 163-amino-acid chain: Nucleotide-binding protein YajQ (163 aa).

The protein belongs to the YajQ family.

Its function is as follows. Nucleotide-binding protein. The chain is Nucleotide-binding protein YajQ from Escherichia coli O127:H6 (strain E2348/69 / EPEC).